The primary structure comprises 973 residues: Vacuolar protein sorting-associated protein 18 homolog (973 aa).

Ala-2 is subject to N-acetylalanine. 3 positions are modified to phosphoserine: Ser-3, Ser-11, and Ser-13. Lys-362 is subject to N6-acetyllysine. Residues 454–481 (EEIALKFLEARQEEALAEFLQRKLAGLK) are a coiled coil. The stretch at 618-772 (GSRLDARQLI…VVQEEEDVQT (155 aa)) is one CHCR repeat. Residue Ser-689 is modified to Phosphoserine. Residues 802 to 848 (KEAICSSLKAYNHHIQELQREMEEATASAQRIRRDLQELRGRYGTVE) adopt a coiled-coil conformation. The segment at 853-947 (CSTCDFPLLN…ELVAAECVYC (95 aa)) adopts an RING-type zinc-finger fold. Phosphoserine is present on Ser-912.

This sequence belongs to the VPS18 family. Core component of at least two putative endosomal tethering complexes, the homotypic fusion and vacuole protein sorting (HOPS) complex and the class C core vacuole/endosome tethering (CORVET) complex. Their common core is composed of the class C Vps proteins VPS11, VPS16, VPS18 and VPS33A, which in HOPS further associates with VPS39 and VPS41 and in CORVET with VPS8 and TGFBRAP1. Interacts with RAB5C. Interacts with HOOK1. Interacts with STX7, MON1B. Associates with adaptor protein complex 3 (AP-3) and clathrin:AP-3 complexes. Interacts with SYNPO2. Interacts with PLEKHM1.

It localises to the late endosome membrane. Its subcellular location is the lysosome membrane. The protein resides in the early endosome. It is found in the cytoplasmic vesicle. The protein localises to the autophagosome. It localises to the clathrin-coated vesicle. In terms of biological role, plays a role in vesicle-mediated protein trafficking to lysosomal compartments including the endocytic membrane transport and autophagic pathways. Believed to act as a core component of the putative HOPS and CORVET endosomal tethering complexes which are proposed to be involved in the Rab5-to-Rab7 endosome conversion probably implicating MON1A/B, and via binding SNAREs and SNARE complexes to mediate tethering and docking events during SNARE-mediated membrane fusion. The HOPS complex is proposed to be recruited to Rab7 on the late endosomal membrane and to regulate late endocytic, phagocytic and autophagic traffic towards lysosomes. The CORVET complex is proposed to function as a Rab5 effector to mediate early endosome fusion probably in specific endosome subpopulations. Required for fusion of endosomes and autophagosomes with lysosomes. Involved in dendrite development of Pukinje cells. This Mus musculus (Mouse) protein is Vacuolar protein sorting-associated protein 18 homolog (Vps18).